The primary structure comprises 206 residues: Ribosomal RNA small subunit methyltransferase G (206 aa).

S-adenosyl-L-methionine contacts are provided by residues Gly74, Leu79, 125–126, and Arg140; that span reads VE.

This sequence belongs to the methyltransferase superfamily. RNA methyltransferase RsmG family.

The protein localises to the cytoplasm. The enzyme catalyses guanosine(527) in 16S rRNA + S-adenosyl-L-methionine = N(7)-methylguanosine(527) in 16S rRNA + S-adenosyl-L-homocysteine. Its function is as follows. Specifically methylates the N7 position of guanine in position 527 of 16S rRNA. This Shewanella frigidimarina (strain NCIMB 400) protein is Ribosomal RNA small subunit methyltransferase G.